A 168-amino-acid chain; its full sequence is Mitochondrial inner membrane protein Mpv17 (168 aa).

4 consecutive transmembrane segments (helical) span residues 12-29 (INVA…QFFF), 41-61 (RTLR…RRWY), 82-101 (MLVD…SFLV), and 144-166 (LGYQ…SMIL).

The protein belongs to the peroxisomal membrane protein PXMP2/4 family. In terms of assembly, part of a larger complex that may be a homohexamer.

It localises to the mitochondrion inner membrane. Functionally, non-selective channel that modulates the membrane potential under normal conditions and oxidative stress, and is involved in mitochondrial homeostasis. Can translocate uridine, but not orotate, across a lipid membrane. Involved in maintenance of mitochondrial ultrastructure. May be involved in mitochondrial DNA (mtDNA) maintenance but does not appear to be directly involved in mitochondrial deoxynucleoside triphosphate (dNTP) pool homeostasis. May be involved in the regulation of reactive oxygen species metabolism and the control of oxidative phosphorylation. The polypeptide is Mitochondrial inner membrane protein Mpv17 (Drosophila melanogaster (Fruit fly)).